The primary structure comprises 249 residues: Putative S-adenosyl-L-methionine-dependent methyltransferase Mjls_0570 (249 aa).

S-adenosyl-L-methionine contacts are provided by residues Asp-111 and 141-142; that span reads DL.

This sequence belongs to the UPF0677 family.

Its function is as follows. Exhibits S-adenosyl-L-methionine-dependent methyltransferase activity. This Mycobacterium sp. (strain JLS) protein is Putative S-adenosyl-L-methionine-dependent methyltransferase Mjls_0570.